The following is a 407-amino-acid chain: MSIDFRNIIKPYPSPIITGRGIDLDFPMLAGCLALLGLGLVMITSASSEVAAVQSGNTLYMMIRHLVYLVIGLGACIVTMMIPIATWQRLGWLMLIGAFGLLIMVILPGIGREVNGSMRWIGFGAFNVQPSEIAKVFVVIYLAGYLVRRQKEVRESWMGFFKPFIVLLPMAGLLLMEPDFGATVVMMGAAAAMLFLGGVGLFRFTLMVVLAVAAVTVLVQAQPYRMARLITFTDPWSDQFGSGYQLTQALIAFGRGEWLGVGLGNSVQKQFYLPEAHTDFVFSVLAEELGVVGSLCTVALFVFVCVRGMYIGMWAEKAKQYFAAYVAYGLSFLWIGQFLINIGVNVGLLPTKGLTLPFLSYGGSSLVICCACLGLLLRIEWESRTHLGSEEMEFSESDFAEEPTHGR.

The Cytoplasmic segment spans residues 1–25 (MSIDFRNIIKPYPSPIITGRGIDLD). A helical membrane pass occupies residues 26–46 (FPMLAGCLALLGLGLVMITSA). Over 47 to 65 (SSEVAAVQSGNTLYMMIRH) the chain is Periplasmic. A helical transmembrane segment spans residues 66–86 (LVYLVIGLGACIVTMMIPIAT). The Cytoplasmic segment spans residues 87–89 (WQR). The chain crosses the membrane as a helical span at residues 90–110 (LGWLMLIGAFGLLIMVILPGI). Topologically, residues 111–119 (GREVNGSMR) are periplasmic. The helical transmembrane segment at 120–140 (WIGFGAFNVQPSEIAKVFVVI) threads the bilayer. Residues 141-155 (YLAGYLVRRQKEVRE) lie on the Cytoplasmic side of the membrane. A helical membrane pass occupies residues 156–176 (SWMGFFKPFIVLLPMAGLLLM). Residues 177–181 (EPDFG) are Periplasmic-facing. Residues 182-202 (ATVVMMGAAAAMLFLGGVGLF) form a helical membrane-spanning segment. A topological domain (cytoplasmic) is located at residue arginine 203. A helical transmembrane segment spans residues 204–224 (FTLMVVLAVAAVTVLVQAQPY). At 225–283 (RMARLITFTDPWSDQFGSGYQLTQALIAFGRGEWLGVGLGNSVQKQFYLPEAHTDFVFS) the chain is on the periplasmic side. A helical transmembrane segment spans residues 284-304 (VLAEELGVVGSLCTVALFVFV). At 305–321 (CVRGMYIGMWAEKAKQY) the chain is on the cytoplasmic side. A helical membrane pass occupies residues 322 to 342 (FAAYVAYGLSFLWIGQFLINI). Residues 343 to 355 (GVNVGLLPTKGLT) are Periplasmic-facing. A helical transmembrane segment spans residues 356-376 (LPFLSYGGSSLVICCACLGLL). Over 377 to 407 (LRIEWESRTHLGSEEMEFSESDFAEEPTHGR) the chain is Cytoplasmic.

Belongs to the SEDS family. FtsW subfamily.

Its subcellular location is the cell inner membrane. The catalysed reaction is [GlcNAc-(1-&gt;4)-Mur2Ac(oyl-L-Ala-gamma-D-Glu-L-Lys-D-Ala-D-Ala)](n)-di-trans,octa-cis-undecaprenyl diphosphate + beta-D-GlcNAc-(1-&gt;4)-Mur2Ac(oyl-L-Ala-gamma-D-Glu-L-Lys-D-Ala-D-Ala)-di-trans,octa-cis-undecaprenyl diphosphate = [GlcNAc-(1-&gt;4)-Mur2Ac(oyl-L-Ala-gamma-D-Glu-L-Lys-D-Ala-D-Ala)](n+1)-di-trans,octa-cis-undecaprenyl diphosphate + di-trans,octa-cis-undecaprenyl diphosphate + H(+). Its pathway is cell wall biogenesis; peptidoglycan biosynthesis. In terms of biological role, peptidoglycan polymerase that is essential for cell division. This Pseudomonas fluorescens (strain SBW25) protein is Probable peptidoglycan glycosyltransferase FtsW.